Reading from the N-terminus, the 146-residue chain is Ribonuclease H (146 aa).

In terms of domain architecture, RNase H type-1 spans 1–143 (MKKRVTIYTD…CDELARQAIK (143 aa)). Positions 10, 48, 70, and 135 each coordinate Mg(2+).

Belongs to the RNase H family. As to quaternary structure, monomer. Requires Mg(2+) as cofactor.

Its subcellular location is the cytoplasm. It catalyses the reaction Endonucleolytic cleavage to 5'-phosphomonoester.. Endonuclease that specifically degrades the RNA of RNA-DNA hybrids. In Chlorobium limicola (strain DSM 245 / NBRC 103803 / 6330), this protein is Ribonuclease H.